Consider the following 795-residue polypeptide: Phenylalanine--tRNA ligase beta subunit (795 aa).

Residues 39-148 enclose the tRNA-binding domain; it reads AGAFHGVVVG…ADAPIGTDIR (110 aa). Residues 401 to 476 enclose the B5 domain; it reads PTRATITLRR…RIYGYNNIPN (76 aa). Mg(2+) is bound by residues Asp-454, Asp-460, Glu-463, and Glu-464. In terms of domain architecture, FDX-ACB spans 701 to 794; it reads SRFPANRRDI…LKQRFQASLR (94 aa).

This sequence belongs to the phenylalanyl-tRNA synthetase beta subunit family. Type 1 subfamily. As to quaternary structure, tetramer of two alpha and two beta subunits. Mg(2+) serves as cofactor.

It localises to the cytoplasm. The catalysed reaction is tRNA(Phe) + L-phenylalanine + ATP = L-phenylalanyl-tRNA(Phe) + AMP + diphosphate + H(+). In Pectobacterium atrosepticum (strain SCRI 1043 / ATCC BAA-672) (Erwinia carotovora subsp. atroseptica), this protein is Phenylalanine--tRNA ligase beta subunit.